We begin with the raw amino-acid sequence, 679 residues long: Translation initiation factor IF-2 (679 aa).

The tr-type G domain maps to 178–347 (KRPPIITVMG…LLTSEMQELK (170 aa)). The G1 stretch occupies residues 187–194 (GHVDHGKT). 187–194 (GHVDHGKT) contacts GTP. A G2 region spans residues 212–216 (GITQH). Residues 233-236 (DTPG) form a G3 region. GTP-binding positions include 233-237 (DTPGH) and 287-290 (NKMD). Positions 287-290 (NKMD) are G4. Residues 323 to 325 (SAK) are G5.

Belongs to the TRAFAC class translation factor GTPase superfamily. Classic translation factor GTPase family. IF-2 subfamily.

It is found in the cytoplasm. One of the essential components for the initiation of protein synthesis. Protects formylmethionyl-tRNA from spontaneous hydrolysis and promotes its binding to the 30S ribosomal subunits. Also involved in the hydrolysis of GTP during the formation of the 70S ribosomal complex. In Clostridium perfringens (strain ATCC 13124 / DSM 756 / JCM 1290 / NCIMB 6125 / NCTC 8237 / Type A), this protein is Translation initiation factor IF-2.